We begin with the raw amino-acid sequence, 508 residues long: Glutamate--cysteine ligase, chloroplastic (508 aa).

The transit peptide at 1 to 59 directs the protein to the chloroplast; sequence MTTIFRLASSSSPSLRHDATPHNFHIRKTSISNTFSFSSKNSLSFKRILTSGGSRRFIV. Disulfide bonds link cysteine 172–cysteine 392 and cysteine 335–cysteine 350.

The protein belongs to the carboxylate-amine ligase family. Glutamate--cysteine ligase type 2 subfamily. Homodimer or monomer when oxidized or reduced, respectively. In terms of processing, the Cys-172-Cys-392 disulfide bridge is known to modulate the enzyme activity according to the redox status. The oxidized form constitutes the active enzyme.

The protein localises to the plastid. Its subcellular location is the chloroplast. The catalysed reaction is L-cysteine + L-glutamate + ATP = gamma-L-glutamyl-L-cysteine + ADP + phosphate + H(+). It participates in sulfur metabolism; glutathione biosynthesis; glutathione from L-cysteine and L-glutamate: step 1/2. The polypeptide is Glutamate--cysteine ligase, chloroplastic (GSH1) (Medicago truncatula (Barrel medic)).